The primary structure comprises 232 residues: 5'-methylthioadenosine/S-adenosylhomocysteine nucleosidase (232 aa).

Glu12 acts as the Proton acceptor in catalysis. Substrate contacts are provided by residues Gly78, Ile152, and 173–174 (ME). Asp197 acts as the Proton donor in catalysis.

Belongs to the PNP/UDP phosphorylase family. MtnN subfamily. In terms of assembly, homodimer.

It carries out the reaction S-adenosyl-L-homocysteine + H2O = S-(5-deoxy-D-ribos-5-yl)-L-homocysteine + adenine. It catalyses the reaction S-methyl-5'-thioadenosine + H2O = 5-(methylsulfanyl)-D-ribose + adenine. The catalysed reaction is 5'-deoxyadenosine + H2O = 5-deoxy-D-ribose + adenine. The protein operates within amino-acid biosynthesis; L-methionine biosynthesis via salvage pathway; S-methyl-5-thio-alpha-D-ribose 1-phosphate from S-methyl-5'-thioadenosine (hydrolase route): step 1/2. Functionally, catalyzes the irreversible cleavage of the glycosidic bond in both 5'-methylthioadenosine (MTA) and S-adenosylhomocysteine (SAH/AdoHcy) to adenine and the corresponding thioribose, 5'-methylthioribose and S-ribosylhomocysteine, respectively. Also cleaves 5'-deoxyadenosine, a toxic by-product of radical S-adenosylmethionine (SAM) enzymes, into 5-deoxyribose and adenine. Thus, is required for in vivo function of the radical SAM enzymes biotin synthase and lipoic acid synthase, that are inhibited by 5'-deoxyadenosine accumulation. The chain is 5'-methylthioadenosine/S-adenosylhomocysteine nucleosidase from Klebsiella pneumoniae (strain 342).